Consider the following 390-residue polypeptide: GTPase Obg (390 aa).

Residues Met1–Leu159 enclose the Obg domain. The OBG-type G domain maps to Ala160–Ile333. GTP is bound by residues Gly166–Ser173, Phe191–Val195, Asp213–Gly216, Asn283–Asp286, and Ser314–Ala316. Mg(2+) is bound by residues Ser173 and Thr193.

The protein belongs to the TRAFAC class OBG-HflX-like GTPase superfamily. OBG GTPase family. Monomer. The cofactor is Mg(2+).

Its subcellular location is the cytoplasm. Its function is as follows. An essential GTPase which binds GTP, GDP and possibly (p)ppGpp with moderate affinity, with high nucleotide exchange rates and a fairly low GTP hydrolysis rate. Plays a role in control of the cell cycle, stress response, ribosome biogenesis and in those bacteria that undergo differentiation, in morphogenesis control. The chain is GTPase Obg from Haemophilus influenzae (strain 86-028NP).